The following is a 320-amino-acid chain: Probable cell division protein WhiA (320 aa).

Residues 276–310 (TLKELGEMVESGKVSKSGVNHRLRKIDELAEKLRA) constitute a DNA-binding region (H-T-H motif).

Belongs to the WhiA family.

In terms of biological role, involved in cell division and chromosome segregation. This Halalkalibacterium halodurans (strain ATCC BAA-125 / DSM 18197 / FERM 7344 / JCM 9153 / C-125) (Bacillus halodurans) protein is Probable cell division protein WhiA.